A 229-amino-acid polypeptide reads, in one-letter code: 7-cyano-7-deazaguanine synthase (229 aa).

9–19 (LSGGLDSTTVL) contributes to the ATP binding site. Residues Cys-192, Cys-202, Cys-205, and Cys-208 each contribute to the Zn(2+) site.

Belongs to the QueC family. It depends on Zn(2+) as a cofactor.

The enzyme catalyses 7-carboxy-7-deazaguanine + NH4(+) + ATP = 7-cyano-7-deazaguanine + ADP + phosphate + H2O + H(+). It functions in the pathway purine metabolism; 7-cyano-7-deazaguanine biosynthesis. Its function is as follows. Catalyzes the ATP-dependent conversion of 7-carboxy-7-deazaguanine (CDG) to 7-cyano-7-deazaguanine (preQ(0)). This is 7-cyano-7-deazaguanine synthase from Kineococcus radiotolerans (strain ATCC BAA-149 / DSM 14245 / SRS30216).